We begin with the raw amino-acid sequence, 258 residues long: Heat-labile enterotoxin A chain (258 aa).

The signal sequence occupies residues 1–18; it reads MKNITFIFFILLASPLYA. Position 25–39 (25–39) interacts with NAD(+); the sequence is RADSRPPDEIKRSGG. Glu128 is a catalytic residue. Cys205 and Cys217 form a disulfide bridge.

It belongs to the enterotoxin A family. Heterohexamer of one A chain and of five B chains.

Functionally, the biological activity of the toxin is produced by the A chain, which activates intracellular adenyl cyclase. The chain is Heat-labile enterotoxin A chain (eltA) from Escherichia coli O78:H11 (strain H10407 / ETEC).